Here is a 21-residue protein sequence, read N- to C-terminus: Snake venom serine protease jerdonase (21 aa).

Positions Ile-1–Ala-21 constitute a Peptidase S1 domain.

It belongs to the peptidase S1 family. Snake venom subfamily. As to quaternary structure, monomer. In terms of processing, glycosylated; contains 35.8% neutral carbohydrate. Expressed by the venom gland.

Its subcellular location is the secreted. Its activity is regulated as follows. Inhibited by PMSF and soybean trypsin inhibitor. Partially inhibited by L-cysteine and DTT. Not affected by EDTA. Multifunctional venom serine protease that has fibrino(geno)lytic activity towards the A alpha-chain of human fibrinogen (FGA) and a slow activity towards the B beta-chain (FGB). Also hydrolyzes bovine low-molecular-mass kininogen and releases bradykinin. Catalyzes the hydrolysis of BAEE, S-2238 and S-2302. The chain is Snake venom serine protease jerdonase from Protobothrops jerdonii (Jerdon's pitviper).